The following is a 284-amino-acid chain: 2-dehydro-3-deoxyphosphooctonate aldolase (284 aa).

Belongs to the KdsA family.

It localises to the cytoplasm. It carries out the reaction D-arabinose 5-phosphate + phosphoenolpyruvate + H2O = 3-deoxy-alpha-D-manno-2-octulosonate-8-phosphate + phosphate. Its pathway is carbohydrate biosynthesis; 3-deoxy-D-manno-octulosonate biosynthesis; 3-deoxy-D-manno-octulosonate from D-ribulose 5-phosphate: step 2/3. It participates in bacterial outer membrane biogenesis; lipopolysaccharide biosynthesis. The protein is 2-dehydro-3-deoxyphosphooctonate aldolase of Sodalis glossinidius (strain morsitans).